A 265-amino-acid chain; its full sequence is MNHDDPNASGVPHDDANDAAPASASDAARATGHADDESSPLHLRRIRSFVTRAGRVSTGQRRAIDELGPRFVVPYDNAQPDWDTVFGRRAPRVLEIGFGMGASTAEIAAHRPGDDFIGVEVHEPGVGALLKLIGEQQLSNIRIIQHDAVEVLEHMIAPDSLDGAHIFFPDPWHKARHHKRRLIQPPFVAQLAARLKPGAYLHCATDWQNYAEQMLEVLGADPSLENTAQDYAPRPDYRPVTKFERRGLRLGHGVWDLVFRKKRAG.

The span at 1–16 (MNHDDPNASGVPHDDA) shows a compositional bias: basic and acidic residues. Residues 1-40 (MNHDDPNASGVPHDDANDAAPASASDAARATGHADDESSP) form a disordered region. Residues 18 to 31 (DAAPASASDAARAT) show a composition bias toward low complexity. Residues Glu-95, Glu-120, Asp-147, and Asp-170 each contribute to the S-adenosyl-L-methionine site. Asp-170 is an active-site residue. Residues Lys-174, Asp-206, and 241–244 (TKFE) each bind substrate.

It belongs to the class I-like SAM-binding methyltransferase superfamily. TrmB family.

The enzyme catalyses guanosine(46) in tRNA + S-adenosyl-L-methionine = N(7)-methylguanosine(46) in tRNA + S-adenosyl-L-homocysteine. It participates in tRNA modification; N(7)-methylguanine-tRNA biosynthesis. Functionally, catalyzes the formation of N(7)-methylguanine at position 46 (m7G46) in tRNA. The sequence is that of tRNA (guanine-N(7)-)-methyltransferase from Burkholderia thailandensis (strain ATCC 700388 / DSM 13276 / CCUG 48851 / CIP 106301 / E264).